The sequence spans 149 residues: Ribosome-binding factor A (149 aa).

Basic and acidic residues predominate over residues Thr-116 to Pro-125. The tract at residues Thr-116–Thr-149 is disordered. A compositionally biased stretch (acidic residues) spans Glu-126–Ser-143.

Belongs to the RbfA family. Monomer. Binds 30S ribosomal subunits, but not 50S ribosomal subunits or 70S ribosomes.

Its subcellular location is the cytoplasm. One of several proteins that assist in the late maturation steps of the functional core of the 30S ribosomal subunit. Associates with free 30S ribosomal subunits (but not with 30S subunits that are part of 70S ribosomes or polysomes). Required for efficient processing of 16S rRNA. May interact with the 5'-terminal helix region of 16S rRNA. This chain is Ribosome-binding factor A, found in Leptospira biflexa serovar Patoc (strain Patoc 1 / Ames).